The sequence spans 117 residues: NADH-ubiquinone oxidoreductase chain 3 (117 aa).

3 consecutive transmembrane segments (helical) span residues 4 to 24 (IILI…LASI), 60 to 80 (ITII…MIII), and 86 to 106 (IMIW…GLYH).

Belongs to the complex I subunit 3 family.

The protein resides in the mitochondrion membrane. It catalyses the reaction a ubiquinone + NADH + 5 H(+)(in) = a ubiquinol + NAD(+) + 4 H(+)(out). Its function is as follows. Core subunit of the mitochondrial membrane respiratory chain NADH dehydrogenase (Complex I) that is believed to belong to the minimal assembly required for catalysis. Complex I functions in the transfer of electrons from NADH to the respiratory chain. The immediate electron acceptor for the enzyme is believed to be ubiquinone. This Drosophila subobscura (Fruit fly) protein is NADH-ubiquinone oxidoreductase chain 3 (mt:ND3).